We begin with the raw amino-acid sequence, 229 residues long: Uracil-DNA glycosylase (229 aa).

D65 serves as the catalytic Proton acceptor.

This sequence belongs to the uracil-DNA glycosylase (UDG) superfamily. UNG family.

The protein resides in the cytoplasm. The enzyme catalyses Hydrolyzes single-stranded DNA or mismatched double-stranded DNA and polynucleotides, releasing free uracil.. Excises uracil residues from the DNA which can arise as a result of misincorporation of dUMP residues by DNA polymerase or due to deamination of cytosine. The polypeptide is Uracil-DNA glycosylase (Limosilactobacillus fermentum (strain NBRC 3956 / LMG 18251) (Lactobacillus fermentum)).